A 153-amino-acid polypeptide reads, in one-letter code: Endoribonuclease YbeY (153 aa).

Positions 113, 117, and 123 each coordinate Zn(2+).

The protein belongs to the endoribonuclease YbeY family. It depends on Zn(2+) as a cofactor.

Its subcellular location is the cytoplasm. Its function is as follows. Single strand-specific metallo-endoribonuclease involved in late-stage 70S ribosome quality control and in maturation of the 3' terminus of the 16S rRNA. This Aliivibrio fischeri (strain MJ11) (Vibrio fischeri) protein is Endoribonuclease YbeY.